We begin with the raw amino-acid sequence, 517 residues long: Phosphatase and actin regulator 3 (517 aa).

The interval 1–24 is disordered; it reads MDQTPPARSEPLVSGIRTPPVRRN. A Phosphothreonine modification is found at Thr-29. Disordered regions lie at residues 41 to 247 and 260 to 320; these read KKKN…RPLP and ATKH…SEEN. The stretch at 52-77 is one RPEL 1 repeat; sequence SALEKKMAGRQGREELIKQGLLEMME. Residues 54 to 68 show a composition bias toward basic and acidic residues; the sequence is LEKKMAGRQGREELI. 2 stretches are compositionally biased toward polar residues: residues 92–129 and 157–172; these read QPAQ…QDEL and LPTT…SGSL. Positions 187–198 are enriched in pro residues; sequence PSPPLLPTPPPK. A Phosphoserine modification is found at Ser-188. Thr-194 carries the phosphothreonine modification. Positions 260 to 300 are enriched in basic and acidic residues; sequence ATKHRQDSFQGRECRGSPKKRMDVRLSRTSSMERGKERDEA. 3 RPEL repeats span residues 359–384, 397–422, and 435–460; these read ELLA…PRRT, MKLS…KQRN, and QRLT…IRFS. Positions 408 to 444 form a coiled coil; the sequence is AVEELERRNILKQRNDQTEQEERREIKQRLTRKLNQR.

This sequence belongs to the phosphatase and actin regulator family. As to quaternary structure, binds actin and PPP1CA; thus inhibiting the protein phosphatase 1 (PP1) activity. In terms of tissue distribution, diffusely expressed throughout the brain cortex, with highest levels in the cortex and the hippocampus and lower levels in the striatum and thalamus.

It localises to the nucleus matrix. In Rattus norvegicus (Rat), this protein is Phosphatase and actin regulator 3 (Phactr3).